The chain runs to 480 residues: Aromatic-L-amino-acid decarboxylase (480 aa).

The residue at position 1 (Met1) is an N-acetylmethionine. 2 tandem repeats follow at residues 58–115 (RDIE…TELE) and 118–178 (MMDW…TQAA). Positions 58-178 (RDIEKIIMPG…AASPELTQAA (121 aa)) are 2 X approximate tandem repeats. Thr82 contacts substrate. Residues Ala148 and Ser149 each contribute to the pyridoxal 5'-phosphate site. His192 serves as a coordination point for substrate. 2 residues coordinate pyridoxal 5'-phosphate: Thr246 and Asn300. Lys303 bears the N6-(pyridoxal phosphate)lysine mark.

The protein belongs to the group II decarboxylase family. In terms of assembly, homodimer. It depends on pyridoxal 5'-phosphate as a cofactor.

The catalysed reaction is L-dopa + H(+) = dopamine + CO2. The enzyme catalyses 5-hydroxy-L-tryptophan + H(+) = serotonin + CO2. The protein operates within catecholamine biosynthesis; dopamine biosynthesis; dopamine from L-tyrosine: step 2/2. Its function is as follows. Catalyzes the decarboxylation of L-3,4-dihydroxyphenylalanine (DOPA) to dopamine and L-5-hydroxytryptophan to serotonin. This Rattus norvegicus (Rat) protein is Aromatic-L-amino-acid decarboxylase.